A 356-amino-acid chain; its full sequence is Glutamine synthetase cytosolic isozyme 2 (356 aa).

A GS beta-grasp domain is found at 19 to 99; sequence IIAEYIWIGG…VMCDTYTPAG (81 aa). The region spanning 106-356 is the GS catalytic domain; sequence KRHNAAKIFS…IAESTILWKP (251 aa).

This sequence belongs to the glutamine synthetase family. In terms of assembly, homooctamer.

It localises to the cytoplasm. It carries out the reaction L-glutamate + NH4(+) + ATP = L-glutamine + ADP + phosphate + H(+). This is Glutamine synthetase cytosolic isozyme 2 (GS1-2) from Vitis vinifera (Grape).